The following is a 199-amino-acid chain: Pyridoxal 5'-phosphate synthase subunit PdxT (199 aa).

L-glutamine is bound at residue 47–49; that stretch reads GES. Cys79 functions as the Nucleophile in the catalytic mechanism. Residues Arg106 and 133–134 each bind L-glutamine; that span reads IR. Catalysis depends on charge relay system residues His169 and Glu171.

The protein belongs to the glutaminase PdxT/SNO family. In terms of assembly, in the presence of PdxS, forms a dodecamer of heterodimers. Only shows activity in the heterodimer.

It carries out the reaction aldehydo-D-ribose 5-phosphate + D-glyceraldehyde 3-phosphate + L-glutamine = pyridoxal 5'-phosphate + L-glutamate + phosphate + 3 H2O + H(+). It catalyses the reaction L-glutamine + H2O = L-glutamate + NH4(+). It functions in the pathway cofactor biosynthesis; pyridoxal 5'-phosphate biosynthesis. Functionally, catalyzes the hydrolysis of glutamine to glutamate and ammonia as part of the biosynthesis of pyridoxal 5'-phosphate. The resulting ammonia molecule is channeled to the active site of PdxS. In Desulfitobacterium hafniense (strain DSM 10664 / DCB-2), this protein is Pyridoxal 5'-phosphate synthase subunit PdxT.